Consider the following 244-residue polypeptide: Secreted RxLR effector protein RXLR-C05 (244 aa).

A signal peptide spans 1-21 (MRGAFYVATAFLIASSTRTAA). Over residues 37 to 46 (LPVGDSDTKS) the composition is skewed to basic and acidic residues. Residues 37 to 56 (LPVGDSDTKSLPRRSLKGSG) form a disordered region. The RxLR-dEER motif lies at 50-68 (RSLKGSGDRLEIPVAEEER).

The protein belongs to the RxLR effector family.

Its subcellular location is the secreted. The protein resides in the host cytoplasm. It localises to the host nucleus. Secreted effector that suppresses pattern-triggered immunity (PTI) in plant host. The chain is Secreted RxLR effector protein RXLR-C05 from Plasmopara halstedii (Downy mildew of sunflower).